Reading from the N-terminus, the 330-residue chain is Probable L-asparaginase (330 aa).

The 325-residue stretch at 6 to 330 (PTIALLATGG…EKIQEMFEEY (325 aa)) folds into the Asparaginase/glutaminase domain. T16 (O-isoaspartyl threonine intermediate) is an active-site residue. Residues S62 and 95–96 (TD) contribute to the substrate site.

It belongs to the asparaginase 1 family.

The protein resides in the cytoplasm. The catalysed reaction is L-asparagine + H2O = L-aspartate + NH4(+). The sequence is that of Probable L-asparaginase (ansA) from Helicobacter pylori (strain ATCC 700392 / 26695) (Campylobacter pylori).